A 515-amino-acid polypeptide reads, in one-letter code: 2,3-bisphosphoglycerate-independent phosphoglycerate mutase (515 aa).

2 residues coordinate Mn(2+): Asp14 and Ser63. Ser63 is a catalytic residue. Residues His124, 154–155 (RD), Arg186, Arg192, 259–262 (RADR), and Lys334 contribute to the substrate site. The Mn(2+) site is built by Asp401, His405, Asp442, His443, and His460.

The protein belongs to the BPG-independent phosphoglycerate mutase family. It depends on Mg(2+) as a cofactor. Mn(2+) serves as cofactor.

It carries out the reaction (2R)-2-phosphoglycerate = (2R)-3-phosphoglycerate. Its pathway is carbohydrate degradation; glycolysis; pyruvate from D-glyceraldehyde 3-phosphate: step 3/5. Its activity is regulated as follows. Activity is not affected by 2,3-bisphosphoglycerate. Its function is as follows. Catalyzes the interconversion of 2-phosphoglycerate and 3-phosphoglycerate. This Onchocerca volvulus protein is 2,3-bisphosphoglycerate-independent phosphoglycerate mutase.